We begin with the raw amino-acid sequence, 446 residues long: Chromosomal replication initiator protein DnaA (446 aa).

The segment at 1–92 (MENISDLWNS…SQAEEEIDLP (92 aa)) is domain I, interacts with DnaA modulators. Residues 93-109 (PAKPNAAQDDSNHLPQS) form a domain II region. The domain III, AAA+ region stretch occupies residues 110–326 (MLNPKYTFDT…GALIRVVAYS (217 aa)). Glycine 154, glycine 156, lysine 157, and threonine 158 together coordinate ATP. Positions 327-446 (SLINKDINAD…QVEEINDILK (120 aa)) are domain IV, binds dsDNA.

This sequence belongs to the DnaA family. Oligomerizes as a right-handed, spiral filament on DNA at oriC.

The protein localises to the cytoplasm. Plays an essential role in the initiation and regulation of chromosomal replication. ATP-DnaA binds to the origin of replication (oriC) to initiate formation of the DNA replication initiation complex once per cell cycle. Binds the DnaA box (a 9 base pair repeat at the origin) and separates the double-stranded (ds)DNA. Forms a right-handed helical filament on oriC DNA; dsDNA binds to the exterior of the filament while single-stranded (ss)DNA is stabiized in the filament's interior. The ATP-DnaA-oriC complex binds and stabilizes one strand of the AT-rich DNA unwinding element (DUE), permitting loading of DNA polymerase. After initiation quickly degrades to an ADP-DnaA complex that is not apt for DNA replication. Binds acidic phospholipids. This Bacillus anthracis (strain A0248) protein is Chromosomal replication initiator protein DnaA.